The following is a 304-amino-acid chain: Protein transport protein sec13 (304 aa).

WD repeat units follow at residues 12 to 51, 56 to 97, 102 to 143, 147 to 203, 211 to 253, and 259 to 298; these read GHDDMIHDAVLDYYGRRLATCSSDRTIKIFEIEGESQRLV, GHDG…WQRI, LHKA…WEHN, AHGL…NGYK, GHTD…PGEW, and NFDAAVWRVSWSLSGNVLAASSDNNKVTLWKENLKGEWEN.

Belongs to the WD repeat SEC13 family. In terms of assembly, the COPII coat is composed of at least 5 proteins: the sec23/24 complex, the sec13/31 complex, and the protein vtr-7/sar1. Component of the nuclear pore complex (NPC). NPC constitutes the exclusive means of nucleocytoplasmic transport. NPCs allow the passive diffusion of ions and small molecules and the active, nuclear transport receptor-mediated bidirectional transport of macromolecules such as proteins, RNAs, ribonucleoparticles (RNPs), and ribosomal subunits across the nuclear envelope. Due to its 8-fold rotational symmetry, all subunits are present with 8 copies or multiples thereof.

The protein resides in the cytoplasmic vesicle. It is found in the COPII-coated vesicle membrane. Its subcellular location is the endoplasmic reticulum membrane. It localises to the nucleus. The protein localises to the nuclear pore complex. Component of the coat protein complex II (COPII) which promotes the formation of transport vesicles from the endoplasmic reticulum (ER). The coat has two main functions, the physical deformation of the endoplasmic reticulum membrane into vesicles and the selection of cargo molecules. It also functions as a component of the nuclear pore complex (NPC). NPC components, collectively referred to as nucleoporins (NUPs), can play the role of both NPC structural components and of docking or interaction partners for transiently associated nuclear transport factors. Nup-20/sec13 is required for efficient mRNA export from the nucleus to the cytoplasm and for correct nuclear pore biogenesis and distribution. The polypeptide is Protein transport protein sec13 (nup-20) (Neurospora crassa (strain ATCC 24698 / 74-OR23-1A / CBS 708.71 / DSM 1257 / FGSC 987)).